We begin with the raw amino-acid sequence, 100 residues long: Large ribosomal subunit protein uL23 (100 aa).

It belongs to the universal ribosomal protein uL23 family. As to quaternary structure, part of the 50S ribosomal subunit. Contacts protein L29, and trigger factor when it is bound to the ribosome.

In terms of biological role, one of the early assembly proteins it binds 23S rRNA. One of the proteins that surrounds the polypeptide exit tunnel on the outside of the ribosome. Forms the main docking site for trigger factor binding to the ribosome. This Mycobacterium marinum (strain ATCC BAA-535 / M) protein is Large ribosomal subunit protein uL23.